Reading from the N-terminus, the 46-residue chain is Denclatoxin-B (46 aa).

Disulfide bonds link Cys3–Cys40, Cys4–Cys32, and Cys16–Cys26.

It belongs to the plant thionin (TC 1.C.44) family.

The protein localises to the secreted. Its function is as follows. Thionins are small plant proteins which are toxic to animal cells. They seem to exert their toxic effect at the level of the cell membrane. Their precise function is not known. The protein is Denclatoxin-B of Dendrophthora clavata (Columbian mistletoe).